The chain runs to 393 residues: Cysteine desulfurase (393 aa).

Pyridoxal 5'-phosphate contacts are provided by residues 76-77 (GT), N155, Q183, and 203-205 (SAH). An N6-(pyridoxal phosphate)lysine modification is found at K206. T241 contacts pyridoxal 5'-phosphate. C328 serves as the catalytic Cysteine persulfide intermediate. C328 contributes to the [2Fe-2S] cluster binding site.

This sequence belongs to the class-V pyridoxal-phosphate-dependent aminotransferase family. NifS/IscS subfamily. As to quaternary structure, homodimer. It depends on pyridoxal 5'-phosphate as a cofactor.

It catalyses the reaction (sulfur carrier)-H + L-cysteine = (sulfur carrier)-SH + L-alanine. Functionally, catalyzes the removal of elemental sulfur atoms from cysteine to produce alanine. Seems to participate in the biosynthesis of the nitrogenase metalloclusters by providing the inorganic sulfur required for the Fe-S core formation. The polypeptide is Cysteine desulfurase (Bradyrhizobium diazoefficiens (strain JCM 10833 / BCRC 13528 / IAM 13628 / NBRC 14792 / USDA 110)).